A 147-amino-acid chain; its full sequence is MKVIFTEDVKGKGKKGELKDVSEGYARNYLIPKNLAVAATSGNIKDLEAQEKSKQKKAEAELQKAKAMKEELEALKIEIPAKAGEGGRLFGAVSTKQIAEALGKQGKKVDKRKIQLDEPIRSLGYTKVPIKIHPEVVATATVHVVEA.

This sequence belongs to the bacterial ribosomal protein bL9 family.

Binds to the 23S rRNA. In Shouchella clausii (strain KSM-K16) (Alkalihalobacillus clausii), this protein is Large ribosomal subunit protein bL9.